Reading from the N-terminus, the 483-residue chain is Betaine aldehyde dehydrogenase (483 aa).

Residues Ile-27 and Asp-93 each contribute to the K(+) site. 149–151 (GAW) contributes to the NAD(+) binding site. Lys-161 functions as the Charge relay system in the catalytic mechanism. Residue 175–178 (KPSE) coordinates NAD(+). Val-179 is a K(+) binding site. 228–231 (SVPT) contacts NAD(+). Val-243 contributes to the K(+) binding site. Glu-249 acts as the Proton acceptor in catalysis. 3 residues coordinate NAD(+): Gly-251, Cys-283, and Glu-380. Cys-283 acts as the Nucleophile in catalysis. At Cys-283 the chain carries Cysteine sulfenic acid (-SOH). K(+) contacts are provided by Lys-450 and Gly-453. The active-site Charge relay system is the Glu-457.

It belongs to the aldehyde dehydrogenase family. As to quaternary structure, dimer of dimers. K(+) is required as a cofactor.

It carries out the reaction betaine aldehyde + NAD(+) + H2O = glycine betaine + NADH + 2 H(+). The protein operates within amine and polyamine biosynthesis; betaine biosynthesis via choline pathway; betaine from betaine aldehyde: step 1/1. Its function is as follows. Involved in the biosynthesis of the osmoprotectant glycine betaine. Catalyzes the irreversible oxidation of betaine aldehyde to the corresponding acid. This Cereibacter sphaeroides (strain ATCC 17029 / ATH 2.4.9) (Rhodobacter sphaeroides) protein is Betaine aldehyde dehydrogenase.